Consider the following 497-residue polypeptide: Putative diacyglycerol O-acyltransferase Rv3480c (497 aa).

Residue His143 is the Proton acceptor of the active site.

It belongs to the long-chain O-acyltransferase family.

The catalysed reaction is an acyl-CoA + a 1,2-diacyl-sn-glycerol = a triacyl-sn-glycerol + CoA. The enzyme catalyses di-(9Z)-octadecenoylglycerol + (9Z)-octadecenoyl-CoA = 1,2,3-tri-(9Z-octadecenoyl)-glycerol + CoA. It catalyses the reaction hexadecan-1-ol + hexadecanoyl-CoA = hexadecanyl hexadecanoate + CoA. The protein operates within glycerolipid metabolism; triacylglycerol biosynthesis. Upon expression in E.coli has a weak triacylglycerol synthase function, making triacylglycerol (TG) from diolein and long-chain fatty acyl-CoA. Also functions weakly as a wax synthase, as it incorporates palmityl alcohol into wax esters in the presence of palmitoyl-CoA. The polypeptide is Putative diacyglycerol O-acyltransferase Rv3480c (Mycobacterium tuberculosis (strain ATCC 25618 / H37Rv)).